The sequence spans 283 residues: Phosphatidylserine decarboxylase proenzyme (283 aa).

Active-site charge relay system; for autoendoproteolytic cleavage activity residues include Asp96, His152, and Ser250. The active-site Schiff-base intermediate with substrate; via pyruvic acid; for decarboxylase activity is Ser250. Ser250 carries the post-translational modification Pyruvic acid (Ser); by autocatalysis.

Belongs to the phosphatidylserine decarboxylase family. PSD-B subfamily. Prokaryotic type I sub-subfamily. Heterodimer of a large membrane-associated beta subunit and a small pyruvoyl-containing alpha subunit. It depends on pyruvate as a cofactor. In terms of processing, is synthesized initially as an inactive proenzyme. Formation of the active enzyme involves a self-maturation process in which the active site pyruvoyl group is generated from an internal serine residue via an autocatalytic post-translational modification. Two non-identical subunits are generated from the proenzyme in this reaction, and the pyruvate is formed at the N-terminus of the alpha chain, which is derived from the carboxyl end of the proenzyme. The autoendoproteolytic cleavage occurs by a canonical serine protease mechanism, in which the side chain hydroxyl group of the serine supplies its oxygen atom to form the C-terminus of the beta chain, while the remainder of the serine residue undergoes an oxidative deamination to produce ammonia and the pyruvoyl prosthetic group on the alpha chain. During this reaction, the Ser that is part of the protease active site of the proenzyme becomes the pyruvoyl prosthetic group, which constitutes an essential element of the active site of the mature decarboxylase.

Its subcellular location is the cell membrane. The catalysed reaction is a 1,2-diacyl-sn-glycero-3-phospho-L-serine + H(+) = a 1,2-diacyl-sn-glycero-3-phosphoethanolamine + CO2. The protein operates within phospholipid metabolism; phosphatidylethanolamine biosynthesis; phosphatidylethanolamine from CDP-diacylglycerol: step 2/2. Functionally, catalyzes the formation of phosphatidylethanolamine (PtdEtn) from phosphatidylserine (PtdSer). The chain is Phosphatidylserine decarboxylase proenzyme from Acinetobacter baumannii (strain AB0057).